The chain runs to 451 residues: 3-phosphoshikimate 1-carboxyvinyltransferase (451 aa).

Residues Lys30, Ser31, and Arg35 each contribute to the 3-phosphoshikimate site. Lys30 contacts phosphoenolpyruvate. Positions 103 and 131 each coordinate phosphoenolpyruvate. Residues Ser176, Gln178, Asp329, and Lys356 each contribute to the 3-phosphoshikimate site. Gln178 contacts phosphoenolpyruvate. The Proton acceptor role is filled by Asp329. Residues Arg360 and Arg404 each coordinate phosphoenolpyruvate.

It belongs to the EPSP synthase family. In terms of assembly, monomer.

It localises to the cytoplasm. The catalysed reaction is 3-phosphoshikimate + phosphoenolpyruvate = 5-O-(1-carboxyvinyl)-3-phosphoshikimate + phosphate. The protein operates within metabolic intermediate biosynthesis; chorismate biosynthesis; chorismate from D-erythrose 4-phosphate and phosphoenolpyruvate: step 6/7. In terms of biological role, catalyzes the transfer of the enolpyruvyl moiety of phosphoenolpyruvate (PEP) to the 5-hydroxyl of shikimate-3-phosphate (S3P) to produce enolpyruvyl shikimate-3-phosphate and inorganic phosphate. This Parvibaculum lavamentivorans (strain DS-1 / DSM 13023 / NCIMB 13966) protein is 3-phosphoshikimate 1-carboxyvinyltransferase.